The following is a 360-amino-acid chain: Peptide chain release factor 1 (360 aa).

Glutamine 236 carries the N5-methylglutamine modification. Residues 288–308 (QDEQDAERKSTIGTGDRSERI) form a disordered region. Residues 293 to 308 (AERKSTIGTGDRSERI) are compositionally biased toward basic and acidic residues.

It belongs to the prokaryotic/mitochondrial release factor family. Post-translationally, methylated by PrmC. Methylation increases the termination efficiency of RF1.

It is found in the cytoplasm. Peptide chain release factor 1 directs the termination of translation in response to the peptide chain termination codons UAG and UAA. The polypeptide is Peptide chain release factor 1 (Streptococcus equi subsp. equi (strain 4047)).